Here is a 433-residue protein sequence, read N- to C-terminus: uncharacterized protein (433 aa).

The region spanning 61-178 (RFNHSLGVYE…QIDADRMDYL (118 aa)) is the HD domain.

This is an uncharacterized protein from Bacillus subtilis (strain 168).